The primary structure comprises 151 residues: MKNKLLFMMLTILGAPGIATATNYDLARSEYNFAVNELSKSSFNQAAIIGQVGTDNSARVRQEGSKLLSVISQEGENNRAKVDQAGNYNFAYIEQTGNANDASISQSAYGNSAAIIQKGSGNKANITQYGTQKTAVVVQKQSHMAIRVTQR.

An N-terminal signal peptide occupies residues 1–21 (MKNKLLFMMLTILGAPGIATA).

The protein belongs to the CsgA/CsgB family.

It localises to the fimbrium. Curlin is the structural subunit of the curli. Curli are coiled surface structures that assemble preferentially at growth temperatures below 37 degrees Celsius. Curli can bind to fibronectin. The minor subunit is the nucleation component of curlin monomers. This is Minor curlin subunit (csgB) from Salmonella typhi.